Here is a 43-residue protein sequence, read N- to C-terminus: TVKTKDRSLSAQYEHTIVVTDNGCEILTLRKDDTIPAIISHNE.

This sequence belongs to the peptidase M24A family. Methionine aminopeptidase type 1 subfamily. In terms of assembly, monomer. Requires Co(2+) as cofactor. Zn(2+) serves as cofactor. The cofactor is Mn(2+). Fe(2+) is required as a cofactor.

It carries out the reaction Release of N-terminal amino acids, preferentially methionine, from peptides and arylamides.. In terms of biological role, removes the N-terminal methionine from nascent proteins. The N-terminal methionine is often cleaved when the second residue in the primary sequence is small and uncharged (Met-Ala-, Cys, Gly, Pro, Ser, Thr, or Val). Requires deformylation of the N(alpha)-formylated initiator methionine before it can be hydrolyzed. This chain is Methionine aminopeptidase (map), found in Klebsiella oxytoca.